The following is a 301-amino-acid chain: GTP cyclohydrolase FolE2 (301 aa).

Belongs to the GTP cyclohydrolase IV family.

The enzyme catalyses GTP + H2O = 7,8-dihydroneopterin 3'-triphosphate + formate + H(+). The protein operates within cofactor biosynthesis; 7,8-dihydroneopterin triphosphate biosynthesis; 7,8-dihydroneopterin triphosphate from GTP: step 1/1. Converts GTP to 7,8-dihydroneopterin triphosphate. The chain is GTP cyclohydrolase FolE2 from Pseudomonas syringae pv. tomato (strain ATCC BAA-871 / DC3000).